The following is a 525-amino-acid chain: MAAMVLAATRLLRGSGSWGRSRPRFGDPAYRRFSSGGAYPNIPLSSPLPGVPKPVFATVDGQEKFETKVTTLDNGLRVASQNKFGQFCTVGILINSGSRYEAKYLSGIAHFLEKLAFSSTERFDSKDEILLTLEKHGGICDCQTSRDTTMYAVSADSKGLDTVVGLLADVVLHPRLTDEEIEMARMAVQFELEDLNMRPDPEPLLTEMVHEAAYRENTVGLHRFCPAENVGKMDRDVLHAYLRNYYTPDRMVLAGVGVEHAQLVECARKYLLGTCPAWGTGAAVHVDRSVAQYTGGIVKLERDMSNVSLGPTPFPELTHIMIGLESCSFLEGDFIPFAVLNMMMGGGGSFSAGGPGKGMFTRLYLNVLNRHHWMYNATSYHHSYEDTGLLCIHASADPRQVREMVEIVTREFVLMAGTVDVVELERAKTQLTSMLMMNLEARPVIFEDVGRQVLATRSRKLPHELCALIRDVKPEDIKRVASKMLRGKPAVAALGDLSELPAYEHVQAALASRDGRLPRVYRLFR.

The transit peptide at 1-33 directs the protein to the mitochondrion; the sequence is MAAMVLAATRLLRGSGSWGRSRPRFGDPAYRRF. An N6-succinyllysine modification is found at lysine 64. The residue at position 299 (lysine 299) is an N6-acetyllysine.

The protein belongs to the peptidase M16 family. As to quaternary structure, heterodimer of PMPCA (alpha) and PMPCB (beta) subunits, forming the mitochondrial processing protease (MPP) in which PMPCA is involved in substrate recognition and binding and PMPCB is the catalytic subunit.

It is found in the mitochondrion matrix. The protein resides in the mitochondrion inner membrane. Its function is as follows. Substrate recognition and binding subunit of the essential mitochondrial processing protease (MPP), which cleaves the mitochondrial sequence off newly imported precursors proteins. In Bos taurus (Bovine), this protein is Mitochondrial-processing peptidase subunit alpha (PMPCA).